Reading from the N-terminus, the 278-residue chain is Small ribosomal subunit protein uS9m (278 aa).

A mitochondrion-targeting transit peptide spans 1-10; it reads MFSRLSLFRR. The interval 259-278 is disordered; that stretch reads VERKKPGKKKARKMPTWVKR.

It belongs to the universal ribosomal protein uS9 family. In terms of assembly, component of the mitochondrial small ribosomal subunit (mt-SSU). Mature yeast 74S mitochondrial ribosomes consist of a small (37S) and a large (54S) subunit. The 37S small subunit contains a 15S ribosomal RNA (15S mt-rRNA) and 34 different proteins. The 54S large subunit contains a 21S rRNA (21S mt-rRNA) and 46 different proteins.

Its subcellular location is the mitochondrion. Functionally, component of the mitochondrial ribosome (mitoribosome), a dedicated translation machinery responsible for the synthesis of mitochondrial genome-encoded proteins, including at least some of the essential transmembrane subunits of the mitochondrial respiratory chain. The mitoribosomes are attached to the mitochondrial inner membrane and translation products are cotranslationally integrated into the membrane. In Saccharomyces cerevisiae (strain ATCC 204508 / S288c) (Baker's yeast), this protein is Small ribosomal subunit protein uS9m (MRPS9).